Reading from the N-terminus, the 691-residue chain is Histone-lysine N-methyltransferase Set8 (691 aa).

The disordered stretch occupies residues 1-29 (MIMVRRRQRPAKEAASSSSGGASSGSGIP). The span at 14–27 (AASSSSGGASSGSG) shows a compositional bias: low complexity. Phosphoserine is present on residues Ser195 and Ser250. Thr252 is subject to Phosphothreonine. Ser281 is subject to Phosphoserine. Disordered regions lie at residues 341–363 (TANTESPAGQPRRRKPATPHRIL), 382–401 (GSADPLSPRKSPRKLPTTTA), 407–437 (KSRRRLNQPKPQAPYQPQLQKPPSQQQQQQQ), and 464–516 (AEER…ATNG). Thr344 carries the phosphothreonine modification. Phosphoserine occurs at positions 346, 383, 388, and 392. 2 stretches are compositionally biased toward polar residues: residues 421–430 (YQPQLQKPPS) and 471–481 (NKAPATANSNK). The SET domain occupies 555–676 (DGLQVRHFMG…PGEELTYDYG (122 aa)). S-adenosyl-L-methionine is bound by residues 565–567 (KGR), Tyr610, and 637–638 (NH).

It belongs to the class V-like SAM-binding methyltransferase superfamily. Histone-lysine methyltransferase family. PR/SET subfamily.

It localises to the nucleus. Its subcellular location is the chromosome. The enzyme catalyses L-lysyl(20)-[histone H4] + S-adenosyl-L-methionine = N(6)-methyl-L-lysyl(20)-[histone H4] + S-adenosyl-L-homocysteine + H(+). Histone methyltransferase that specifically monomethylates 'Lys-20' of histone H4. H4 'Lys-20' monomethylation is enriched during mitosis and represents a specific tag for epigenetic transcriptional repression. Mainly functions in euchromatin regions, thereby playing a central role in the silencing of euchromatic genes. Required for cell proliferation, possibly by contributing to the maintenance of proper higher-order structure of DNA and chromosome condensation during mitosis. The chain is Histone-lysine N-methyltransferase Set8 from Drosophila melanogaster (Fruit fly).